A 278-amino-acid polypeptide reads, in one-letter code: MAETKDQNVLNIIIISDAAGDTAFSNATAAAAEFPNAEINYRRYPFITNLEKLDEVLKEIEKYPNLVIIFSLVKDEMQIPVIKFARDHNIQCVDIFSPVVEAIQQTTHMIPDQKIGAQHSLNQKYFDRISAMEFAVMYDDGKDPKGFLEADVVLLGVSRTSKTPLSLFLANKNLKVANLPLVPETHIPKEIYEIDPKKIIGLTNDPSVLNEIRRQRMIAYGLNPDTTYSSMDSINKELESAQALYKKLGCYVINVAHRSIEETAALILEHLGIDDYAK.

156–163 (GVSRTSKT) is a binding site for ADP.

This sequence belongs to the pyruvate, phosphate/water dikinase regulatory protein family. PDRP subfamily.

The enzyme catalyses N(tele)-phospho-L-histidyl/L-threonyl-[pyruvate, phosphate dikinase] + ADP = N(tele)-phospho-L-histidyl/O-phospho-L-threonyl-[pyruvate, phosphate dikinase] + AMP + H(+). The catalysed reaction is N(tele)-phospho-L-histidyl/O-phospho-L-threonyl-[pyruvate, phosphate dikinase] + phosphate + H(+) = N(tele)-phospho-L-histidyl/L-threonyl-[pyruvate, phosphate dikinase] + diphosphate. Bifunctional serine/threonine kinase and phosphorylase involved in the regulation of the pyruvate, phosphate dikinase (PPDK) by catalyzing its phosphorylation/dephosphorylation. This Lactobacillus acidophilus (strain ATCC 700396 / NCK56 / N2 / NCFM) protein is Putative pyruvate, phosphate dikinase regulatory protein.